An 84-amino-acid chain; its full sequence is Acyl carrier protein (84 aa).

The Carrier domain maps to 6-81 (EEILTGLAEI…DAVDYIANAT (76 aa)). An O-(pantetheine 4'-phosphoryl)serine modification is found at serine 41.

Belongs to the acyl carrier protein (ACP) family. 4'-phosphopantetheine is transferred from CoA to a specific serine of apo-ACP by AcpS. This modification is essential for activity because fatty acids are bound in thioester linkage to the sulfhydryl of the prosthetic group.

It localises to the cytoplasm. The protein operates within lipid metabolism; fatty acid biosynthesis. Functionally, carrier of the growing fatty acid chain in fatty acid biosynthesis. The protein is Acyl carrier protein of Acidothermus cellulolyticus (strain ATCC 43068 / DSM 8971 / 11B).